The primary structure comprises 243 residues: Phosphoadenosine 5'-phosphosulfate reductase (243 aa).

Cysteine 239 (nucleophile; cysteine thiosulfonate intermediate) is an active-site residue.

It belongs to the PAPS reductase family. CysH subfamily.

It is found in the cytoplasm. The enzyme catalyses [thioredoxin]-disulfide + sulfite + adenosine 3',5'-bisphosphate + 2 H(+) = [thioredoxin]-dithiol + 3'-phosphoadenylyl sulfate. Its pathway is sulfur metabolism; hydrogen sulfide biosynthesis; sulfite from sulfate: step 3/3. In terms of biological role, catalyzes the formation of sulfite from phosphoadenosine 5'-phosphosulfate (PAPS) using thioredoxin as an electron donor. The chain is Phosphoadenosine 5'-phosphosulfate reductase from Erwinia tasmaniensis (strain DSM 17950 / CFBP 7177 / CIP 109463 / NCPPB 4357 / Et1/99).